A 194-amino-acid polypeptide reads, in one-letter code: Large ribosomal subunit protein uL6z/uL6y (194 aa).

Threonine 75 is subject to Phosphothreonine.

This sequence belongs to the universal ribosomal protein uL6 family.

This chain is Large ribosomal subunit protein uL6z/uL6y (RPL9B), found in Arabidopsis thaliana (Mouse-ear cress).